The following is an 872-amino-acid chain: Bifunctional heparan sulfate N-deacetylase/N-sulfotransferase 4 (872 aa).

The Cytoplasmic segment spans residues 1–13; that stretch reads MNLILKFRRSFRT. A helical; Signal-anchor for type II membrane protein transmembrane segment spans residues 14-34; it reads LIVLLATFCLVSILISAYFLY. Residues 35–872 are Lumenal-facing; it reads SGYKQEMTLI…WLRQELQKVR (838 aa). The segment at 36 to 588 is heparan sulfate N-deacetylase 4; that stretch reads GYKQEMTLIE…KRHKDIWSRE (553 aa). N-linked (GlcNAc...) asparagine glycans are attached at residues Asn226, Asn341, and Asn391. Positions 589–872 are heparan sulfate N-sulfotransferase 4; the sequence is KTCDHLPKFL…WLRQELQKVR (284 aa). Lys604 functions as the For sulfotransferase activity in the catalytic mechanism. 604-608 provides a ligand contact to 3'-phosphoadenylyl sulfate; sequence KTGTT. N-linked (GlcNAc...) asparagine glycosylation occurs at Asn657. Ser702 lines the 3'-phosphoadenylyl sulfate pocket. Residue Asn793 is glycosylated (N-linked (GlcNAc...) asparagine). Cys808 and Cys818 are disulfide-bonded. Position 823-827 (823-827) interacts with 3'-phosphoadenylyl sulfate; sequence KGRKY.

This sequence belongs to the sulfotransferase 1 family. NDST subfamily. Monomer. As to expression, expressed at low level in brain and throughout embryogenesis. Not expressed in other tissues.

It localises to the golgi apparatus membrane. The catalysed reaction is alpha-D-glucosaminyl-[heparan sulfate](n) + 3'-phosphoadenylyl sulfate = N-sulfo-alpha-D-glucosaminyl-[heparan sulfate](n) + adenosine 3',5'-bisphosphate + 2 H(+). Its pathway is glycan metabolism; heparan sulfate biosynthesis. The protein operates within glycan metabolism; heparin biosynthesis. Its function is as follows. Essential bifunctional enzyme that catalyzes both the N-deacetylation and the N-sulfation of glucosamine (GlcNAc) of the glycosaminoglycan in heparan sulfate. Modifies the GlcNAc-GlcA disaccharide repeating sugar backbone to make N-sulfated heparosan, a prerequisite substrate for later modifications in heparin biosynthesis. Has low deacetylase activity but high sulfotransferase activity. The chain is Bifunctional heparan sulfate N-deacetylase/N-sulfotransferase 4 (Ndst4) from Mus musculus (Mouse).